A 556-amino-acid polypeptide reads, in one-letter code: Formate--tetrahydrofolate ligase 1 (556 aa).

An ATP-binding site is contributed by 65 to 72; it reads TPAGEGKS.

It belongs to the formate--tetrahydrofolate ligase family.

The enzyme catalyses (6S)-5,6,7,8-tetrahydrofolate + formate + ATP = (6R)-10-formyltetrahydrofolate + ADP + phosphate. The protein operates within one-carbon metabolism; tetrahydrofolate interconversion. The sequence is that of Formate--tetrahydrofolate ligase 1 from Streptococcus pyogenes serotype M4 (strain MGAS10750).